The sequence spans 624 residues: Glutaminase 2 (624 aa).

Residues 1–20 (MDTQPIRLPSVAGATRSAGY) are disordered. Positions 43 to 325 (GELADYIPEL…LSARFDLHML (283 aa)) are glutaminase. Substrate contacts are provided by Ser-85, Asn-134, Glu-178, Asn-185, Tyr-209, Tyr-261, and Val-279. An STAS domain is found at 355–466 (QQILDERHSD…ALLDDAIEWA (112 aa)). Position 491-608 (491-608 (LLAELDTDEI…IMRNLAAILA (118 aa))) interacts with a nucleoside 3',5'-cyclic phosphate.

This sequence belongs to the glutaminase family. As to quaternary structure, homotetramer.

It catalyses the reaction L-glutamine + H2O = L-glutamate + NH4(+). The chain is Glutaminase 2 (glsA2) from Bradyrhizobium diazoefficiens (strain JCM 10833 / BCRC 13528 / IAM 13628 / NBRC 14792 / USDA 110).